Reading from the N-terminus, the 25-residue chain is Caerin-2.5 (25 aa).

Expressed by the skin parotoid and/or rostral glands.

Its subcellular location is the secreted. Antibacterial peptide, that adopts an alpha helical conformation which can disrupt bacterial membranes. Each caerin displays a different antimicrobial specificity. The chain is Caerin-2.5 from Ranoidea gilleni (Centralian tree frog).